The sequence spans 477 residues: Trigger factor (477 aa).

The region spanning 169–254 (EDRVTIDYLG…VKEVAKPNEL (86 aa)) is the PPIase FKBP-type domain. The disordered stretch occupies residues 435 to 477 (VSKEELTAEDEDAASEAKPAKKAAAKKKAAPKKKAEEGKSEEA). Basic residues predominate over residues 454-466 (AKKAAAKKKAAPK). Over residues 467–477 (KKAEEGKSEEA) the composition is skewed to basic and acidic residues.

This sequence belongs to the FKBP-type PPIase family. Tig subfamily.

The protein resides in the cytoplasm. The catalysed reaction is [protein]-peptidylproline (omega=180) = [protein]-peptidylproline (omega=0). Its function is as follows. Involved in protein export. Acts as a chaperone by maintaining the newly synthesized protein in an open conformation. Functions as a peptidyl-prolyl cis-trans isomerase. This chain is Trigger factor, found in Brucella suis biovar 1 (strain 1330).